A 214-amino-acid chain; its full sequence is Pyridoxine/pyridoxamine 5'-phosphate oxidase (214 aa).

Substrate-binding positions include 10–13 and lysine 68; that span reads RLNY. Residues 63 to 68, 78 to 79, lysine 85, and glutamine 107 contribute to the FMN site; these read RMVLLK and YT. Residues tyrosine 125, arginine 129, and serine 133 each coordinate substrate. Residues 142 to 143 and tryptophan 187 each bind FMN; that span reads QS. 193–195 provides a ligand contact to substrate; that stretch reads RLH. Position 197 (arginine 197) interacts with FMN.

Belongs to the pyridoxamine 5'-phosphate oxidase family. In terms of assembly, homodimer. Requires FMN as cofactor.

The enzyme catalyses pyridoxamine 5'-phosphate + O2 + H2O = pyridoxal 5'-phosphate + H2O2 + NH4(+). It catalyses the reaction pyridoxine 5'-phosphate + O2 = pyridoxal 5'-phosphate + H2O2. Its pathway is cofactor metabolism; pyridoxal 5'-phosphate salvage; pyridoxal 5'-phosphate from pyridoxamine 5'-phosphate: step 1/1. It functions in the pathway cofactor metabolism; pyridoxal 5'-phosphate salvage; pyridoxal 5'-phosphate from pyridoxine 5'-phosphate: step 1/1. In terms of biological role, catalyzes the oxidation of either pyridoxine 5'-phosphate (PNP) or pyridoxamine 5'-phosphate (PMP) into pyridoxal 5'-phosphate (PLP). This is Pyridoxine/pyridoxamine 5'-phosphate oxidase from Synechocystis sp. (strain ATCC 27184 / PCC 6803 / Kazusa).